The chain runs to 333 residues: MTIRVAINGFGRIGRNVLRAIVESGRTDIEVVAINDLGQVETNAHLLRFDSVHGRFPAKVTSGDDWIDVGRGPIKVTAIRNPAELPWAGVDMAMECTGIFTTKEKAAAHLQNGAKRVLVSAPCDGADRTIVYGVNHATLTADDLVVSNASCTTNCLSPVAKVLHDAIGIAKGFMTTIHSYTGDQPTLDTMHKDLYRARAAALSMIPTSTGAAKAVGLVLPELKGRLDGVSIRVPTPNVSVVDLVFEAARDTTVEEVNAAIEAAACGPLKGVLGFTTEPNVSSDFNHDPHSSVFHMDQTKVMEGRMVRILSWYDNEWGFSNRMADTAVAMGRLL.

NAD(+) contacts are provided by residues 12 to 13 (RI), D36, R80, and S120. Residues 150-152 (SCT), T181, R196, 209-210 (TG), and R232 contribute to the D-glyceraldehyde 3-phosphate site. C151 serves as the catalytic Nucleophile. NAD(+) is bound at residue N314.

Belongs to the glyceraldehyde-3-phosphate dehydrogenase family. In terms of assembly, homotetramer.

The protein resides in the cytoplasm. The catalysed reaction is D-glyceraldehyde 3-phosphate + phosphate + NAD(+) = (2R)-3-phospho-glyceroyl phosphate + NADH + H(+). It participates in carbohydrate degradation; glycolysis; pyruvate from D-glyceraldehyde 3-phosphate: step 1/5. In terms of biological role, catalyzes the oxidative phosphorylation of glyceraldehyde 3-phosphate (G3P) to 1,3-bisphosphoglycerate (BPG) using the cofactor NAD. The first reaction step involves the formation of a hemiacetal intermediate between G3P and a cysteine residue, and this hemiacetal intermediate is then oxidized to a thioester, with concomitant reduction of NAD to NADH. The reduced NADH is then exchanged with the second NAD, and the thioester is attacked by a nucleophilic inorganic phosphate to produce BPG. This Cereibacter sphaeroides (Rhodobacter sphaeroides) protein is Glyceraldehyde-3-phosphate dehydrogenase (gapB).